The primary structure comprises 156 residues: MKIQLVAVGTRMPDWVETGFKEYQRRFPRDMALELVEIPAGKRGKNADIARILQKEGELMLAAIPKGNHIVSLDLPGKNLTTPQLAEQMNKWLLDGRDVSLLIGGPEGLSPECKKAAAQSWCLSALTLPHPLVRVIVAESLYRGWSINNNHPYHRE.

Residues leucine 73, glycine 104, and 123–128 contribute to the S-adenosyl-L-methionine site; that span reads LSALTL.

It belongs to the RNA methyltransferase RlmH family. In terms of assembly, homodimer.

The protein localises to the cytoplasm. The catalysed reaction is pseudouridine(1915) in 23S rRNA + S-adenosyl-L-methionine = N(3)-methylpseudouridine(1915) in 23S rRNA + S-adenosyl-L-homocysteine + H(+). Specifically methylates the pseudouridine at position 1915 (m3Psi1915) in 23S rRNA. The polypeptide is Ribosomal RNA large subunit methyltransferase H (Shewanella pealeana (strain ATCC 700345 / ANG-SQ1)).